The sequence spans 214 residues: MVGWLKGLIVYKLQRGNRSQITLNCNGVGYEVQITQREWLTLENDQTIQLWIHQSISADNWQFFGFKSTQERDIFRELISVNGVGPQAGMALMQECKSQELVEAISNGDLRRLCKAQGIGKRTAERLAVELRASIAAFAGMDPAPSLAEGVSSEQMPESGADVEATLSMLGYDDLEVRRAIRAIAEGSDGPPPPGDDQDAWLRGCLQWLSRDSA.

The tract at residues 1-67 is domain I; it reads MVGWLKGLIV…ADNWQFFGFK (67 aa). The tract at residues 68-146 is domain II; it reads STQERDIFRE…AFAGMDPAPS (79 aa). Residues 147–154 form a flexible linker region; sequence LAEGVSSE. Residues 155-214 are domain III; that stretch reads QMPESGADVEATLSMLGYDDLEVRRAIRAIAEGSDGPPPPGDDQDAWLRGCLQWLSRDSA.

Belongs to the RuvA family. As to quaternary structure, homotetramer. Forms an RuvA(8)-RuvB(12)-Holliday junction (HJ) complex. HJ DNA is sandwiched between 2 RuvA tetramers; dsDNA enters through RuvA and exits via RuvB. An RuvB hexamer assembles on each DNA strand where it exits the tetramer. Each RuvB hexamer is contacted by two RuvA subunits (via domain III) on 2 adjacent RuvB subunits; this complex drives branch migration. In the full resolvosome a probable DNA-RuvA(4)-RuvB(12)-RuvC(2) complex forms which resolves the HJ.

Its subcellular location is the cytoplasm. Its function is as follows. The RuvA-RuvB-RuvC complex processes Holliday junction (HJ) DNA during genetic recombination and DNA repair, while the RuvA-RuvB complex plays an important role in the rescue of blocked DNA replication forks via replication fork reversal (RFR). RuvA specifically binds to HJ cruciform DNA, conferring on it an open structure. The RuvB hexamer acts as an ATP-dependent pump, pulling dsDNA into and through the RuvAB complex. HJ branch migration allows RuvC to scan DNA until it finds its consensus sequence, where it cleaves and resolves the cruciform DNA. In Synechococcus sp. (strain CC9605), this protein is Holliday junction branch migration complex subunit RuvA.